The sequence spans 597 residues: Gigaxonin (597 aa).

The BTB domain occupies 30-99; it reads CDAHLVLDGE…IFSGQIRLNE (70 aa). In terms of domain architecture, BACK spans 134-236; that stretch reads CIGIRDFALH…DSSYLREQML (103 aa). Kelch repeat units follow at residues 274 to 326, 327 to 374, 376 to 421, 422 to 468, 470 to 522, and 528 to 574; these read CIVT…SAEG, FLFV…EIDG, LYIL…AMKK, KIYA…GVAM, LYVF…VYGA, and SIYV…AALR.

Interacts with TBCB. Interacts with CUL3. Part of a complex that contains CUL3, RBX1 and GAN. Interacts (via BTB domain) with UBA1. Interacts (via Kelch domains) with MAP1B (via C-terminus) and MAP1S (via C-terminus). Post-translationally, ubiquitinated by E3 ubiquitin ligase complex formed by CUL3 and RBX1 and probably targeted for proteasome-independent degradation. In terms of tissue distribution, expressed in brain, heart and muscle.

The protein resides in the cytoplasm. The protein localises to the cytoskeleton. It participates in protein modification; protein ubiquitination. Its function is as follows. Probable cytoskeletal component that directly or indirectly plays an important role in neurofilament architecture. May act as a substrate-specific adapter of an E3 ubiquitin-protein ligase complex which mediates the ubiquitination and subsequent proteasomal degradation of target proteins. Controls degradation of TBCB. Controls degradation of MAP1B and MAP1S, and is critical for neuronal maintenance and survival. This chain is Gigaxonin (GAN), found in Homo sapiens (Human).